The chain runs to 788 residues: MKESAASVAVRPQLREVFERFPADAHRTIEDEIHEMMKCYAFDDAIFLAELHYETDKSNNSESLLLYADCLYRANKKEECYGLLSSVKLSGARLFYLLARVSYDLNKIDDCRGALFEHDDGVIRKDILEEPRVASHANLLHAQMLCDESYMDLALESCQKSLDENILLWSAIITYLRFGGHDLAHTFEKHHRKSNGLYLDSPASSLKSETPSPNVPGPSSSSAASTAEPSRLESSVRRSTRGTIASANRETRNTTSNITPRQSTPGSTPSRINPTAPRKSSRISEMTTRRTESSVTGSRSSLFTEPERPHTRATHSSRNRANAALNSDTENSNASNTRTRSGIASVTRGSSSSQRTNPVRTSIRIADAAAAANKTAKTLSQRRRNEKQPLVSRNSNLARSLSGSTNSVASTASERPSEDEVSQINPPLPSVASSLNNDEPMDIVDGVYDPEYKKLFDVYQHIALIEESISTYNWRSADALFAKLDRDIILNTSMVRLQLGRACFEQSEYRECRNILDDLHKRRKWKVDGTELLSTSMWHLQDTHALSALSQILTTESRERPQSWCAAGNCFSLQRQHTQAIECMERAIQLDKRFAYAYTLLGHELIVQDELDKAAGSFRSALLLSPRDYRAWYGLGLVHLKKEQNLTALTNIQKAVNINPTNRAMLCTLSQIEQQRGQIDTALVLIDRALTLNPLDVACRFNRSRLLFEANRNEECLVELDKLKASSPDEAFIFHLLARVHRRMGNTHLALLNYSWAAELDPRGEQNITDSNVINREEYEDDEYGSPV.

Residues 198 to 436 are disordered; that stretch reads YLDSPASSLK…PLPSVASSLN (239 aa). Low complexity predominate over residues 217–229; sequence GPSSSSAASTAEP. Polar residues-rich tracts occupy residues 241–273, 293–303, and 319–360; these read RGTIASANRETRNTTSNITPRQSTPGSTPSRIN, SSVTGSRSSLF, and NRAN…NPVR. Over residues 366-378 the composition is skewed to low complexity; the sequence is ADAAAAANKTAKT. A compositionally biased stretch (polar residues) spans 391–414; that stretch reads VSRNSNLARSLSGSTNSVASTASE. 5 TPR repeats span residues 561–594, 596–628, 629–662, 664–696, and 731–764; these read PQSWCAAGNCFSLQRQHTQAIECMERAIQLDKRF, YAYTLLGHELIVQDELDKAAGSFRSALLLSPRD, YRAWYGLGLVHLKKEQNLTALTNIQKAVNINPTN, AMLCTLSQIEQQRGQIDTALVLIDRALTLNPLD, and AFIFHLLARVHRRMGNTHLALLNYSWAAELDPRG.

This sequence belongs to the APC3/CDC27 family. The APC/C complex is probably composed of at least 12 subunits: apc-2, apc-10, apc-11, cdc-26, emb-1, emb-27, emb-30, mat-1, mat-2, mat-3, such-1 and gfi-3. Expressed in the ventral nerve cord.

The protein localises to the nucleus. It functions in the pathway protein modification; protein ubiquitination. Probable component of the anaphase promoting complex/cyclosome (APC/C), a cell cycle-regulated E3 ubiquitin ligase that controls progression through mitosis and the G1 phase of the cell cycle. The APC/C complex acts by mediating ubiquitination and subsequent degradation of target proteins. Developmental role in early embryogenesis and the metaphase to anaphase transition in oocyte and spermatocyte meiosis and mitosis in germ cells. Required for embryonic anterior-posterior axis formation. Plays a role in regulating the abundance of glr-1 receptors in postmitotic neurons, which may in turn control animal locomotion. The polypeptide is Cell division cycle protein 27 homolog (Caenorhabditis elegans).